Consider the following 406-residue polypeptide: Tyrosine-specific transport system 2 (406 aa).

11 helical membrane-spanning segments follow: residues 7-27 (FGSA…AMPL), 38-58 (LLLL…FVEV), 83-103 (IFAT…YITG), 119-139 (AMSL…FVVV), 150-170 (VLFI…LPKV), 183-203 (AFVV…VIMA), 219-239 (AILI…LATH), 279-299 (VFSS…VFEG), 314-334 (FVLT…YPEG), 335-355 (FITA…ILPI), and 376-396 (NFAL…PFLI).

The protein belongs to the amino acid/polyamine transporter 2 family. Mtr/TnaB/TyrP permease subfamily.

It localises to the cell inner membrane. It carries out the reaction L-tyrosine(in) + H(+)(in) = L-tyrosine(out) + H(+)(out). Its function is as follows. Transports tyrosine across the cytoplasmic membrane. The transport system is energized by the proton motive force. The polypeptide is Tyrosine-specific transport system 2 (tyrP-B) (Haemophilus influenzae (strain ATCC 51907 / DSM 11121 / KW20 / Rd)).